We begin with the raw amino-acid sequence, 752 residues long: Pre-mRNA-processing factor 39 (752 aa).

The tract at residues 1–148 (MEDSGESMTG…DPAAPQEPEL (148 aa)) is disordered. The span at 28-42 (TTGTDDVTGLSTSDL) shows a compositional bias: polar residues. Composition is skewed to low complexity over residues 43-56 (TTEQPPESQEQTQP), 76-94 (QSASPAEPAAENSEQPPES), and 133-148 (EPAAEADPAAPQEPEL). HAT repeat units lie at residues 180–212 (NHLLGSRKAFDAFFLHYPYCYGYWKKYADIERK), 214–246 (GYIQMADEVYRRGLQAIPLSVDLWLHYITFLRE), and 254–289 (EAESRIRASYEHAVLACGTDFRSDRLWEAYIAWETE). The interval 347 to 374 (NKPSGDEDAETEAPGEELPPGTEDLPDP) is disordered. A compositionally biased stretch (acidic residues) spans 352–361 (DEDAETEAPG). HAT repeat units follow at residues 408 to 440 (AFEEGIKRPYFHVKALEKTQLNNWREYLDFELE) and 442 to 474 (GTPERVVVLFERCLIACALYEEFWIKYAKYLES). Positions 678–699 (SFKRKAENGSEEPDAKRQRTDD) are enriched in basic and acidic residues. Residues 678–703 (SFKRKAENGSEEPDAKRQRTDDQSVA) form a disordered region. Residues 700–731 (QSVASGQMMDMQANHAGYNYNNWYQYNSWGSQ) form an HAT 6 repeat.

Belongs to the PRP39 family.

The protein localises to the nucleus. Functionally, involved in pre-mRNA splicing. This is Pre-mRNA-processing factor 39 (prpf39) from Danio rerio (Zebrafish).